We begin with the raw amino-acid sequence, 121 residues long: Large ribosomal subunit protein bL19 (121 aa).

This sequence belongs to the bacterial ribosomal protein bL19 family.

In terms of biological role, this protein is located at the 30S-50S ribosomal subunit interface and may play a role in the structure and function of the aminoacyl-tRNA binding site. This is Large ribosomal subunit protein bL19 from Borrelia garinii subsp. bavariensis (strain ATCC BAA-2496 / DSM 23469 / PBi) (Borreliella bavariensis).